Here is a 344-residue protein sequence, read N- to C-terminus: Trace amine-associated receptor 8b (344 aa).

The Extracellular segment spans residues 1 to 31 (MTSNFSQPALQLCYENTNGSCIKTPYSPGPR). N-linked (GlcNAc...) asparagine glycans are attached at residues Asn4 and Asn18. 2 cysteine pairs are disulfide-bonded: Cys21–Cys185 and Cys104–Cys189. A helical membrane pass occupies residues 32-52 (VILYMVFGFGAVLAVCGNLLV). Residues 53–67 (VISVLHFKQLHSPAN) lie on the Cytoplasmic side of the membrane. A helical transmembrane segment spans residues 68 to 88 (FLIASLASADFLVGISVMPFS). The Extracellular portion of the chain corresponds to 89-111 (MVRSIESCWYFGDAFCSLHSCCD). Residues 112–132 (VAFCYSSALHLCFISVDRYIA) form a helical membrane-spanning segment. At 133–146 (VTDPLVYPTKFTVS) the chain is on the cytoplasmic side. A helical membrane pass occupies residues 147 to 167 (VSGICISISWILPLVYSSAVF). Over 168-195 (YTGISAKGIESLVSALNCVGGCQIVVNQ) the chain is Extracellular. Residues 196–216 (DWVLIDFLLFFIPTLVMIILY) traverse the membrane as a helical segment. Topologically, residues 217–260 (SKIFLVAKQQAVKIETSVSDNRGESSSESHKARVAKRERKAAKT) are cytoplasmic. Residues 261–281 (LGVTVVAFMVSWLPYTIDSLV) traverse the membrane as a helical segment. A topological domain (extracellular) is located at residue Asp282. A helical membrane pass occupies residues 283-303 (AFVGFITPAYVYEICCWSAYY). Residues 304–344 (NSAMNPLIYAFFYPWFRKAIKLILSGEILKSHSSTMSLFSE) are Cytoplasmic-facing.

The protein belongs to the G-protein coupled receptor 1 family. As to expression, specifically expressed in neurons of the olfactory epithelium.

It localises to the cell membrane. In terms of biological role, olfactory receptor specific for trace amines. Trace amine compounds are enriched in animal body fluids and act on trace amine-associated receptors (TAARs) to elicit both intraspecific and interspecific innate behaviors. Ligand-binding causes a conformation change that triggers signaling via G alpha proteins, possibly G(i)/G(o) G alpha proteins. The sequence is that of Trace amine-associated receptor 8b from Mus musculus (Mouse).